A 644-amino-acid chain; its full sequence is DNA gyrase subunit B (644 aa).

Positions 429–543 (CEIFLVEGDS…AGYVYIAQPP (115 aa)) constitute a Toprim domain. Residues E435, D508, and D510 each coordinate Mg(2+).

Belongs to the type II topoisomerase GyrB family. As to quaternary structure, heterotetramer, composed of two GyrA and two GyrB chains. In the heterotetramer, GyrA contains the active site tyrosine that forms a transient covalent intermediate with DNA, while GyrB binds cofactors and catalyzes ATP hydrolysis. The cofactor is Mg(2+). It depends on Mn(2+) as a cofactor. Ca(2+) is required as a cofactor.

It localises to the cytoplasm. The enzyme catalyses ATP-dependent breakage, passage and rejoining of double-stranded DNA.. A type II topoisomerase that negatively supercoils closed circular double-stranded (ds) DNA in an ATP-dependent manner to modulate DNA topology and maintain chromosomes in an underwound state. Negative supercoiling favors strand separation, and DNA replication, transcription, recombination and repair, all of which involve strand separation. Also able to catalyze the interconversion of other topological isomers of dsDNA rings, including catenanes and knotted rings. Type II topoisomerases break and join 2 DNA strands simultaneously in an ATP-dependent manner. This chain is DNA gyrase subunit B, found in Staphylococcus aureus (strain Mu50 / ATCC 700699).